The primary structure comprises 374 residues: Tuliposide A-converting enzyme b2, amyloplastic (374 aa).

Residues 1–68 (MSVALFCGPP…TNSSLSPSPT (68 aa)) constitute an amyloplast transit peptide. The active-site Acyl-ester intermediate is the Ser-226. Catalysis depends on charge relay system residues Asp-316 and His-348.

The protein belongs to the AB hydrolase superfamily. As to quaternary structure, homodimer. In terms of tissue distribution, highly expressed in pistil and bulb scales. Lower expression in stem, and barely detected in root, leaf, petal and stamen.

The protein resides in the plastid. Its subcellular location is the amyloplast. The enzyme catalyses 6-tuliposide A = tulipalin A + D-glucose. Its function is as follows. Lactone-forming carboxylesterases, specifically catalyzing intramolecular transesterification, but not hydrolysis. Involved in the biosynthesis of tulipalins, defensive chemicals that show antimicrobial activities against a broad range of strains of bacteria and fungi. Substrates are 6-tuliposide A &gt; 6-tuliposide B. This Tulipa gesneriana (Garden tulip) protein is Tuliposide A-converting enzyme b2, amyloplastic (TCEA-B2).